The primary structure comprises 222 residues: Protein GrpE (222 aa).

The disordered stretch occupies residues 1–64; the sequence is MSDQNLGQGS…GEEILSDDDL (64 aa). Basic and acidic residues predominate over residues 16–44; that stretch reads EEPIVRDKRRIDPETGKVREPQDLSHEEL. Acidic residues predominate over residues 54–64; it reads QGEEILSDDDL.

It belongs to the GrpE family. As to quaternary structure, homodimer.

The protein localises to the cytoplasm. Participates actively in the response to hyperosmotic and heat shock by preventing the aggregation of stress-denatured proteins, in association with DnaK and GrpE. It is the nucleotide exchange factor for DnaK and may function as a thermosensor. Unfolded proteins bind initially to DnaJ; upon interaction with the DnaJ-bound protein, DnaK hydrolyzes its bound ATP, resulting in the formation of a stable complex. GrpE releases ADP from DnaK; ATP binding to DnaK triggers the release of the substrate protein, thus completing the reaction cycle. Several rounds of ATP-dependent interactions between DnaJ, DnaK and GrpE are required for fully efficient folding. The protein is Protein GrpE of Leifsonia xyli subsp. xyli (strain CTCB07).